The following is a 434-amino-acid chain: Putative peptidase B (434 aa).

Mn(2+) is bound by residues Lys-198 and Asp-203. Lys-210 is a catalytic residue. Mn(2+)-binding residues include Asp-221, Asp-280, and Glu-282. Arg-284 is an active-site residue.

This sequence belongs to the peptidase M17 family. In terms of assembly, homohexamer. It depends on Mn(2+) as a cofactor.

It is found in the cytoplasm. The catalysed reaction is Release of an N-terminal amino acid, Xaa, from a peptide or arylamide. Xaa is preferably Glu or Asp but may be other amino acids, including Leu, Met, His, Cys and Gln.. Functionally, probably plays an important role in intracellular peptide degradation. The polypeptide is Putative peptidase B (Haemophilus influenzae (strain ATCC 51907 / DSM 11121 / KW20 / Rd)).